The primary structure comprises 853 residues: E3 ubiquitin-protein ligase ZNRF3 (853 aa).

The N-terminal stretch at 1 to 28 is a signal peptide; the sequence is MKEPRIRGGLPLVWLWVLLAVAPGESLA. Topologically, residues 29–192 are extracellular; the sequence is KETAFVEVVL…PRQPTEYFDM (164 aa). Residues 193–213 form a helical membrane-spanning segment; the sequence is GIFLAFFVVVSLVCLILLIKI. Residues 214-853 are Cytoplasmic-facing; that stretch reads KLKQRRSQNS…GQDCHPTDRD (640 aa). The RING-type; atypical zinc finger occupies 266–307; it reads CAICLEKYIDGEELRVIPCTHRFHKRCVDPWLLQNHTCPHCR. 4 disordered regions span residues 583–629, 650–673, 685–713, and 834–853; these read SRSP…RLSS, SSGT…RGPE, GDPS…GGLY, and TGKE…TDRD. Positions 589-607 are enriched in gly residues; it reads TGGGDAPGCGGEGGTGSGR. Residues 615 to 629 show a composition bias toward polar residues; sequence HQTFPNSPSRDRLSS.

Belongs to the ZNRF3 family.

Its subcellular location is the cell membrane. The enzyme catalyses S-ubiquitinyl-[E2 ubiquitin-conjugating enzyme]-L-cysteine + [acceptor protein]-L-lysine = [E2 ubiquitin-conjugating enzyme]-L-cysteine + N(6)-ubiquitinyl-[acceptor protein]-L-lysine.. Its pathway is protein modification; protein ubiquitination. In terms of biological role, E3 ubiquitin-protein ligase that acts as a negative regulator of the Wnt signaling pathway by mediating the ubiquitination and subsequent degradation of Wnt receptor complex components. Along with RSPO2 and RNF43, constitutes a master switch that governs limb specification. This Xenopus tropicalis (Western clawed frog) protein is E3 ubiquitin-protein ligase ZNRF3 (znrf3).